The primary structure comprises 905 residues: Protein translocase subunit SecA (905 aa).

ATP-binding positions include Q87, 105–109 (GEGKT), and D512. The tract at residues 565–584 (RRIDNQLRGRSGRQGDPGSS) is disordered. Residues C886, C888, C897, and H898 each coordinate Zn(2+).

The protein belongs to the SecA family. Monomer and homodimer. Part of the essential Sec protein translocation apparatus which comprises SecA, SecYEG and auxiliary proteins SecDF-YajC and YidC. Zn(2+) serves as cofactor.

It is found in the cell inner membrane. The protein localises to the cytoplasm. The catalysed reaction is ATP + H2O + cellular proteinSide 1 = ADP + phosphate + cellular proteinSide 2.. Its function is as follows. Part of the Sec protein translocase complex. Interacts with the SecYEG preprotein conducting channel. Has a central role in coupling the hydrolysis of ATP to the transfer of proteins into and across the cell membrane, serving both as a receptor for the preprotein-SecB complex and as an ATP-driven molecular motor driving the stepwise translocation of polypeptide chains across the membrane. The sequence is that of Protein translocase subunit SecA from Haemophilus ducreyi (strain 35000HP / ATCC 700724).